The following is a 131-amino-acid chain: MRIEDEIKNIIEKKDYDFWEFLKKAYENNIKLDIGHFILLNILIGVNDLYHKLSEKFGEEEARKILERNKIFAKNSDFISGEFLKDYIDRKSRVAVHNRIKDLKTLGFKIESKSGPFGGYKIVGYPEWFKK.

This is an uncharacterized protein from Methanocaldococcus jannaschii (strain ATCC 43067 / DSM 2661 / JAL-1 / JCM 10045 / NBRC 100440) (Methanococcus jannaschii).